The following is a 432-amino-acid chain: 23S rRNA (uracil(1939)-C(5))-methyltransferase RlmD (432 aa).

The TRAM domain occupies 1–54 (MNPVVDILSLDHEGHGVARLDGKVTFVDGALAGERAEIAIFRKHAKYNSANAVA). Residues C67, C73, C76, and C155 each coordinate [4Fe-4S] cluster. Positions 264, 293, 298, 314, 341, and 362 each coordinate S-adenosyl-L-methionine. Catalysis depends on C389, which acts as the Nucleophile.

Belongs to the class I-like SAM-binding methyltransferase superfamily. RNA M5U methyltransferase family. RlmD subfamily.

The enzyme catalyses uridine(1939) in 23S rRNA + S-adenosyl-L-methionine = 5-methyluridine(1939) in 23S rRNA + S-adenosyl-L-homocysteine + H(+). Catalyzes the formation of 5-methyl-uridine at position 1939 (m5U1939) in 23S rRNA. This is 23S rRNA (uracil(1939)-C(5))-methyltransferase RlmD from Thiobacillus denitrificans (strain ATCC 25259 / T1).